Consider the following 541-residue polypeptide: Protein wntless homolog (541 aa).

Residues 1 to 15 (MAGAIIENMSTKKLC) lie on the Cytoplasmic side of the membrane. The helical transmembrane segment at 16–36 (IVGGILLVFQIVAFLVGGLIA) threads the bilayer. The Lumenal portion of the chain corresponds to 37–232 (PAPTTAVSYV…GIHQNGGFTK (196 aa)). The tract at residues 101-202 (MEMSPWFQFM…KYYLLNIRLP (102 aa)) is interaction with Wnt proteins. A helical membrane pass occupies residues 233 to 253 (VWFAMKTFLTPSIFIIMVWYW). The Cytoplasmic portion of the chain corresponds to 254–268 (RRITMMSRPPVLLEK). Residues 269–289 (VIFALGISMTFINIPVEWFSI) traverse the membrane as a helical segment. Topologically, residues 290-303 (GFDWTWMLLFGDIR) are lumenal. The chain crosses the membrane as a helical span at residues 304-324 (QGIFYAMLLSFWIIFCGEHMM). Over 325-331 (DQHERNH) the chain is Cytoplasmic. Residues 332-352 (IAGYWKQVGPIAVGSFCLFIF) traverse the membrane as a helical segment. At 353–380 (DMCERGVQLTNPFYSIWTTDVGTELAMA) the chain is on the lumenal side. A helical membrane pass occupies residues 381-401 (FIIVAGICLCLYFLFLCFMVF). Over 402–431 (QVFRNISGKQSSLPAMSKVRRLHYEGLIFR) the chain is Cytoplasmic. Residues 432-452 (FKFLMLITLACAAMTVIFFIV) form a helical membrane-spanning segment. At 453–471 (SQVTEGHWKWGGVTVQVSS) the chain is on the lumenal side. A helical membrane pass occupies residues 472-492 (AFFTGIYGMWNLYVFALMFLY). Topologically, residues 493 to 541 (APSHKNYGEDQSNGDLGVHSGEELQLTTTITHVDGPTEIYKLTRKEAQE) are cytoplasmic.

The protein belongs to the wntless family. As to quaternary structure, interacts with WNT3A. Interacts with WNT1, WNT3 and WNT5A. In terms of processing, N-glycosylated. Expressed in the brain, skeletal muscle, heart muscle, lung, gut, liver, and kidney (at protein level). In the brain, expressed in the cortex, striatum, ventral tegmentum, nucleus accumbens and to a lesser extent in the Purkinjie cells in the cerebellum. Expressed in eye iridocorneal angle.

The protein localises to the golgi apparatus membrane. It is found in the cytoplasmic vesicle membrane. It localises to the cell membrane. The protein resides in the endoplasmic reticulum membrane. Its subcellular location is the early endosome membrane. Regulates Wnt proteins sorting and secretion in a feedback regulatory mechanism. This reciprocal interaction plays a key role in the regulation of expression, subcellular location, binding and organelle-specific association of Wnt proteins. Also plays an important role in establishment of the anterior-posterior body axis formation during development. This is Protein wntless homolog (Wls) from Rattus norvegicus (Rat).